A 308-amino-acid polypeptide reads, in one-letter code: Pantothenate kinase (308 aa).

Residue 91–98 (GSVAVGKS) coordinates ATP.

This sequence belongs to the prokaryotic pantothenate kinase family.

The protein localises to the cytoplasm. The catalysed reaction is (R)-pantothenate + ATP = (R)-4'-phosphopantothenate + ADP + H(+). It functions in the pathway cofactor biosynthesis; coenzyme A biosynthesis; CoA from (R)-pantothenate: step 1/5. The sequence is that of Pantothenate kinase from Lacticaseibacillus paracasei (strain ATCC 334 / BCRC 17002 / CCUG 31169 / CIP 107868 / KCTC 3260 / NRRL B-441) (Lactobacillus paracasei).